We begin with the raw amino-acid sequence, 512 residues long: Bifunctional pantoate ligase/cytidylate kinase (512 aa).

Residues 1 to 276 form a pantoate--beta-alanine ligase region; the sequence is MKLQTSADLQ…CGEARLIDHR (276 aa). Position 27–34 (27–34) interacts with ATP; sequence MGALHQGH. His-34 serves as the catalytic Proton donor. Residue Gln-58 participates in (R)-pantoate binding. Gln-58 contacts beta-alanine. Residue 147 to 150 participates in ATP binding; that stretch reads GEKD. Residue Gln-153 participates in (R)-pantoate binding. Residues Leu-176 and 184–187 contribute to the ATP site; that span reads LSSR. The tract at residues 277-512 is cytidylate kinase; that stretch reads VLMSRLPILA…VPVEALNADA (236 aa).

This sequence in the N-terminal section; belongs to the pantothenate synthetase family. The protein in the C-terminal section; belongs to the cytidylate kinase family. Type 1 subfamily.

The protein localises to the cytoplasm. The enzyme catalyses (R)-pantoate + beta-alanine + ATP = (R)-pantothenate + AMP + diphosphate + H(+). It carries out the reaction CMP + ATP = CDP + ADP. It catalyses the reaction dCMP + ATP = dCDP + ADP. It participates in cofactor biosynthesis; (R)-pantothenate biosynthesis; (R)-pantothenate from (R)-pantoate and beta-alanine: step 1/1. Catalyzes the condensation of pantoate with beta-alanine in an ATP-dependent reaction via a pantoyl-adenylate intermediate. Functionally, catalyzes the transfer of a phosphate group from ATP to either CMP or dCMP to form CDP or dCDP and ADP, respectively. The polypeptide is Bifunctional pantoate ligase/cytidylate kinase (Synechococcus sp. (strain RCC307)).